A 263-amino-acid chain; its full sequence is uncharacterized protein (263 aa).

The tract at residues 183 to 263 (APHDRPEGVP…PPSTNTKGAA (81 aa)) is disordered. Composition is skewed to polar residues over residues 230-239 (SRPTAPSRPS) and 253-263 (TPPSTNTKGAA).

Functionally, probably does not play a direct role in plasmid integration or excision. This is an uncharacterized protein from Saccharopolyspora erythraea (Streptomyces erythraeus).